Reading from the N-terminus, the 276-residue chain is uncharacterized protein (276 aa).

The first 16 residues, 1-16, serve as a signal peptide directing secretion; sequence MELGLILMFASAFVSA. N-linked (GlcNAc...) asparagine glycosylation occurs at N265.

This is an uncharacterized protein from Encephalitozoon cuniculi (strain GB-M1) (Microsporidian parasite).